A 264-amino-acid polypeptide reads, in one-letter code: Thymidylate synthase (264 aa).

Arg21 provides a ligand contact to dUMP. His51 lines the (6R)-5,10-methylene-5,6,7,8-tetrahydrofolate pocket. Residue 126–127 (RR) coordinates dUMP. Residue Cys146 is the Nucleophile of the active site. Residues 166–169 (RSCD), Asn177, and 207–209 (HLY) contribute to the dUMP site. Asp169 serves as a coordination point for (6R)-5,10-methylene-5,6,7,8-tetrahydrofolate. A (6R)-5,10-methylene-5,6,7,8-tetrahydrofolate-binding site is contributed by Ala263.

The protein belongs to the thymidylate synthase family. Bacterial-type ThyA subfamily. Homodimer.

It localises to the cytoplasm. The enzyme catalyses dUMP + (6R)-5,10-methylene-5,6,7,8-tetrahydrofolate = 7,8-dihydrofolate + dTMP. The protein operates within pyrimidine metabolism; dTTP biosynthesis. Functionally, catalyzes the reductive methylation of 2'-deoxyuridine-5'-monophosphate (dUMP) to 2'-deoxythymidine-5'-monophosphate (dTMP) while utilizing 5,10-methylenetetrahydrofolate (mTHF) as the methyl donor and reductant in the reaction, yielding dihydrofolate (DHF) as a by-product. This enzymatic reaction provides an intracellular de novo source of dTMP, an essential precursor for DNA biosynthesis. The sequence is that of Thymidylate synthase from Shewanella baltica (strain OS155 / ATCC BAA-1091).